A 203-amino-acid polypeptide reads, in one-letter code: Molybdenum cofactor guanylyltransferase (203 aa).

Residues 12–14, K25, N53, D71, and D101 each bind GTP; that span reads LAG. Residue D101 participates in Mg(2+) binding.

It belongs to the MobA family. As to quaternary structure, monomer. Mg(2+) serves as cofactor.

It is found in the cytoplasm. It catalyses the reaction Mo-molybdopterin + GTP + H(+) = Mo-molybdopterin guanine dinucleotide + diphosphate. Its function is as follows. Transfers a GMP moiety from GTP to Mo-molybdopterin (Mo-MPT) cofactor (Moco or molybdenum cofactor) to form Mo-molybdopterin guanine dinucleotide (Mo-MGD) cofactor. This is Molybdenum cofactor guanylyltransferase from Cupriavidus metallidurans (strain ATCC 43123 / DSM 2839 / NBRC 102507 / CH34) (Ralstonia metallidurans).